Consider the following 2210-residue polypeptide: RNA-directed RNA polymerase L (2210 aa).

Positions 26–285 (KAIFLSQTKL…KCAIMSEEDS (260 aa)) are endonuclease. Glu51, Asp88, and Glu101 together coordinate Mn(2+). Lys114 is an active-site residue. The RdRp catalytic domain maps to 1163–1359 (LDMKSVVRQG…FLSDKLNKFV (197 aa)). Asp1319 serves as a coordination point for Mg(2+).

This sequence belongs to the Bunyavirales RNA polymerase family. As to quaternary structure, homomultimer; the oligomeric structure is essential for the polymerase activity. Interacts with nucleoprotein N. Interacts with protein Z; this interaction inhibits viral transcription and replication, Z partially blocks the product exit tunnel for the releasing nascent RNA product. Mn(2+) serves as cofactor. The cofactor is Mg(2+).

It localises to the virion. It is found in the host cytoplasm. It carries out the reaction RNA(n) + a ribonucleoside 5'-triphosphate = RNA(n+1) + diphosphate. In terms of biological role, RNA-dependent RNA polymerase, which is responsible for the replication and transcription of the viral RNA genome using antigenomic RNA as an intermediate. During transcription, synthesizes subgenomic RNAs and assures their capping by a cap-snatching mechanism, which involves the endonuclease activity cleaving the host capped pre-mRNAs. These short capped RNAs are then used as primers for viral transcription. The 3'-end of subgenomic mRNAs molecules are heterogeneous and not polyadenylated. The replicase function is to direct synthesis of antigenomic and genomic RNA which are encapsidated and non capped. As a consequence of the use of the same enzyme for both transcription and replication, these mechanisms need to be well coordinated. These processes may be regulated by proteins N and Z in a dose-dependent manner. Z protein inhibits the viral polymerase L und thus the viral transcription and RNA synthesis. This chain is RNA-directed RNA polymerase L, found in Sigmodon alstoni (PIRV).